We begin with the raw amino-acid sequence, 246 residues long: Uridylate kinase (246 aa).

ATP is bound at residue 10–13 (KLSG). Gly-52 lines the UMP pocket. ATP contacts are provided by Gly-53 and Arg-57. UMP contacts are provided by residues Asp-72 and 133 to 140 (TGNPFFTT). Residues Thr-160, Tyr-166, and Asp-169 each coordinate ATP.

The protein belongs to the UMP kinase family. As to quaternary structure, homohexamer.

It localises to the cytoplasm. The enzyme catalyses UMP + ATP = UDP + ADP. It functions in the pathway pyrimidine metabolism; CTP biosynthesis via de novo pathway; UDP from UMP (UMPK route): step 1/1. Its activity is regulated as follows. Inhibited by UTP. Its function is as follows. Catalyzes the reversible phosphorylation of UMP to UDP. This Halorhodospira halophila (strain DSM 244 / SL1) (Ectothiorhodospira halophila (strain DSM 244 / SL1)) protein is Uridylate kinase.